Here is a 576-residue protein sequence, read N- to C-terminus: Lysine--tRNA ligase (576 aa).

Mg(2+)-binding residues include Glu412 and Glu419.

The protein belongs to the class-II aminoacyl-tRNA synthetase family. As to quaternary structure, homodimer. Mg(2+) is required as a cofactor.

It is found in the cytoplasm. The enzyme catalyses tRNA(Lys) + L-lysine + ATP = L-lysyl-tRNA(Lys) + AMP + diphosphate. The sequence is that of Lysine--tRNA ligase from Phocaeicola vulgatus (strain ATCC 8482 / DSM 1447 / JCM 5826 / CCUG 4940 / NBRC 14291 / NCTC 11154) (Bacteroides vulgatus).